Consider the following 1381-residue polypeptide: Hepatocyte growth factor receptor (1381 aa).

The signal sequence occupies residues 1-24; it reads MKAPAVLTPGILLLLFTLVQKSNG. Residues 25–932 are Extracellular-facing; it reads ECKEALTKSE…VIVQPDQNFT (908 aa). In terms of domain architecture, Sema spans 27–515; it reads KEALTKSEMN…TGKKITKIPL (489 aa). Residue Asn-45 is glycosylated (N-linked (GlcNAc...) asparagine). 4 cysteine pairs are disulfide-bonded: Cys-95–Cys-101, Cys-98–Cys-160, Cys-133–Cys-141, and Cys-172–Cys-175. Residue Asn-106 is glycosylated (N-linked (GlcNAc...) asparagine). A glycan (N-linked (GlcNAc...) asparagine) is linked at Asn-149. N-linked (GlcNAc...) asparagine glycosylation is present at Asn-202. 2 disulfides stabilise this stretch: Cys-298–Cys-363 and Cys-385–Cys-397. Asn-399 is a glycosylation site (N-linked (GlcNAc...) asparagine). 4 disulfides stabilise this stretch: Cys-520–Cys-538, Cys-526–Cys-561, Cys-529–Cys-545, and Cys-541–Cys-551. 3 consecutive IPT/TIG domains span residues 563–655, 657–739, and 742–836; these read PTIY…FSYV, PIIT…FSYR, and PIVY…LIYV. Thr-582 carries O-linked (Man) threonine glycosylation. N-linked (GlcNAc...) asparagine glycosylation is found at Asn-607 and Asn-635. Residues Thr-676 and Thr-761 are each glycosylated (O-linked (Man) threonine). N-linked (GlcNAc...) asparagine glycosylation is found at Asn-785, Asn-879, and Asn-930. A helical transmembrane segment spans residues 933-955; sequence GLIAGVVSISIALLLLLGLFLWL. Residues 956-1381 are Cytoplasmic-facing; it reads KKRKQIKDLG…QDNADGELDT (426 aa). Ser-966 is subject to Phosphoserine. Thr-977 is subject to Phosphothreonine. Phosphoserine is present on residues Ser-990, Ser-997, and Ser-1000. At Tyr-1003 the chain carries Phosphotyrosine. A Protein kinase domain is found at 1078-1345; sequence VHFNEVIGRG…RISAIFSTFI (268 aa). Residues 1084 to 1092 and Lys-1110 each bind ATP; that span reads IGRGHFGCV. Asp-1204 functions as the Proton acceptor in the catalytic mechanism. Residues 1212–1381 are interaction with RANBP9; the sequence is LDEKFTVKVA…QDNADGELDT (170 aa). At Tyr-1230 the chain carries Phosphotyrosine. A phosphotyrosine; by autocatalysis mark is found at Tyr-1234 and Tyr-1235. The residue at position 1289 (Thr-1289) is a Phosphothreonine. Positions 1320-1359 are interaction with MUC20; that stretch reads WHPKAEMRPSFSELVSRISAIFSTFIGEHYVHVNATYVNV. Tyr-1349 and Tyr-1356 each carry phosphotyrosine; by autocatalysis. Tyr-1365 is subject to Phosphotyrosine.

This sequence belongs to the protein kinase superfamily. Tyr protein kinase family. As to quaternary structure, heterodimer made of an alpha chain (50 kDa) and a beta chain (145 kDa) which are disulfide linked. Binds PLXNB1. Interacts when phosphorylated with downstream effectors including STAT3, PIK3R1, SRC, PCLG1, GRB2 and GAB1. Interacts with SPSB1, SPSB2 and SPSB4. Interacts with INPP5D/SHIP1. When phosphorylated at Tyr-1356, interacts with INPPL1/SHIP2. Interacts with RANBP9 and RANBP10, as well as SPSB1, SPSB2, SPSB3 and SPSB4. SPSB1 binding occurs in the presence and in the absence of HGF, however HGF treatment has a positive effect on this interaction. Interacts with MUC20; prevents interaction with GRB2 and suppresses hepatocyte growth factor-induced cell proliferation. Interacts with GRB10. Interacts with PTPN1 and PTPN2. Interacts with HSP90AA1 and HSP90AB1; the interaction suppresses MET kinase activity. Interacts with tensin TNS3. Interacts (when phosphorylated) with tensin TNS4 (via SH2 domain); the interaction increases MET protein stability by inhibiting MET endocytosis and subsequent lysosomal degradation. In terms of processing, autophosphorylated in response to ligand binding on Tyr-1234 and Tyr-1235 in the kinase domain leading to further phosphorylation of Tyr-1349 and Tyr-1356 in the C-terminal multifunctional docking site. Dephosphorylated by PTPRJ at Tyr-1349 and Tyr-1365. Dephosphorylated by PTPN1 and PTPN2. Post-translationally, ubiquitinated. Ubiquitination by CBL regulates the receptor stability and activity through proteasomal degradation. O-mannosylation of IPT/TIG domains by TMEM260 is required for protein maturation. O-mannosylated residues are composed of single mannose glycans that are not elongated or modified.

It is found in the membrane. It catalyses the reaction L-tyrosyl-[protein] + ATP = O-phospho-L-tyrosyl-[protein] + ADP + H(+). In its inactive state, the C-terminal tail interacts with the catalytic domain and inhibits the kinase activity. Upon ligand binding, the C-terminal tail is displaced and becomes phosphorylated, thus increasing the kinase activity. Functionally, receptor tyrosine kinase that transduces signals from the extracellular matrix into the cytoplasm by binding to hepatocyte growth factor/HGF ligand. Regulates many physiological processes including proliferation, scattering, morphogenesis and survival. Ligand binding at the cell surface induces autophosphorylation of MET on its intracellular domain that provides docking sites for downstream signaling molecules. Following activation by ligand, interacts with the PI3-kinase subunit PIK3R1, PLCG1, SRC, GRB2, STAT3 or the adapter GAB1. Recruitment of these downstream effectors by MET leads to the activation of several signaling cascades including the RAS-ERK, PI3 kinase-AKT, or PLCgamma-PKC. The RAS-ERK activation is associated with the morphogenetic effects while PI3K/AKT coordinates prosurvival effects. During embryonic development, MET signaling plays a role in gastrulation, development and migration of muscles and neuronal precursors, angiogenesis and kidney formation. In adults, participates in wound healing as well as organ regeneration and tissue remodeling. Also promotes differentiation and proliferation of hematopoietic cells. The polypeptide is Hepatocyte growth factor receptor (MET) (Saimiri boliviensis boliviensis (Bolivian squirrel monkey)).